The sequence spans 348 residues: Putative olfactory receptor 3A4 (348 aa).

The Extracellular segment spans residues 1–28; the sequence is MDLGNSGNDSVVTKFVLLGLTETAALQP. N-linked (GlcNAc...) asparagine glycosylation occurs at Asn-8. A helical membrane pass occupies residues 29–52; the sequence is ILFVIFLLAYVTTIGGTLSILAAI. Residues 53–60 lie on the Cytoplasmic side of the membrane; it reads LMETKLHS. The helical transmembrane segment at 61–82 threads the bilayer; the sequence is PMYFFLGNLSLPDVGCVSVTVP. At 83-103 the chain is on the extracellular side; the sequence is AMLSHFISNDRSIPYKACLSE. A disulfide bridge connects residues Cys-100 and Cys-192. Residues 104–123 form a helical membrane-spanning segment; it reads LFFFHLLAGADCFLLTIMAY. Over 124 to 143 the chain is Cytoplasmic; it reads DRYLAICQSLTYSSRMSWGI. A helical transmembrane segment spans residues 144–161; it reads QQALVGMSCVFSFTNALT. The Extracellular segment spans residues 162 to 199; the sequence is QTVALSPLNFCGPNVINHFYCDLPQPFQLSCSSVHLNG. The chain crosses the membrane as a helical span at residues 200–222; sequence QLLFVAAAFMGVAPLVLITVSYA. The Cytoplasmic segment spans residues 223-239; sequence HVAAAVLRIRSAEGRKK. The chain crosses the membrane as a helical span at residues 240–262; it reads AFSTCSSHLTVVGIFYGTGVFSY. At 263 to 275 the chain is on the extracellular side; that stretch reads TRLGSVESSDKDK. Residues 276–295 traverse the membrane as a helical segment; that stretch reads GIGILNTVISPMLNPLIYWT. Topologically, residues 296–348 are cytoplasmic; that stretch reads SLLDVGCISHCSSDAGVSPGPPVQSSLCCLQFTALLSPPPGWGGLSPLNSHGL.

The protein belongs to the G-protein coupled receptor 1 family.

It is found in the cell membrane. Odorant receptor. The protein is Putative olfactory receptor 3A4 (OR3A4P) of Homo sapiens (Human).